Consider the following 373-residue polypeptide: Valienol-1-phosphate guanylyltransferase (373 aa).

Substrate-binding positions include Gly-177 and 192 to 193 (EK).

Belongs to the bacterial/plant glucose-1-phosphate adenylyltransferase family. Mg(2+) serves as cofactor.

The enzyme catalyses valienol 1-phosphate + GTP + H(+) = GDP-valienol + diphosphate. Its function is as follows. Involved in the biosynthesis of the antifungal agent validamycin A. Catalyzes the conversion of valienol 1-phosphate to GDP-valienol and less effectively to ADP-valienol or other NDP derivatives. This Streptomyces hygroscopicus subsp. limoneus protein is Valienol-1-phosphate guanylyltransferase.